A 113-amino-acid polypeptide reads, in one-letter code: U11-theraphotoxin-Hhn1s (113 aa).

A signal peptide spans 1–21; that stretch reads MNTVRVTFLLVFVLAVSLGQA. Positions 22 to 74 are excised as a propeptide; the sequence is DKDENRMEMQEKTEQGKSYLDFAENLLLQKLEELEAKLLEEDSEESRNSRQKR. Positions 61–83 are disordered; it reads EEDSEESRNSRQKRCIGEGVPCD. 3 disulfide bridges follow: cysteine 75–cysteine 90, cysteine 82–cysteine 95, and cysteine 89–cysteine 110.

The protein belongs to the neurotoxin 14 (magi-1) family. 01 (HNTX-16) subfamily. In terms of tissue distribution, expressed by the venom gland.

It localises to the secreted. In terms of biological role, probable ion channel inhibitor. The polypeptide is U11-theraphotoxin-Hhn1s (Cyriopagopus hainanus (Chinese bird spider)).